The primary structure comprises 371 residues: Opine oxidase subunit B (371 aa).

Heterodimer of a subunit A and a subunit B.

The protein operates within opine metabolism; octopine degradation. In terms of biological role, oxidative cleavage of octopine into L-arginine and pyruvate. The polypeptide is Opine oxidase subunit B (ooxB) (Agrobacterium tumefaciens (strain Ach5)).